The chain runs to 318 residues: Acetyl-coenzyme A carboxylase carboxyl transferase subunit alpha (318 aa).

The 254-residue stretch at 39–292 (LTDKSEKQLR…GDSIAAELPD (254 aa)) folds into the CoA carboxyltransferase C-terminal domain.

Belongs to the AccA family. As to quaternary structure, acetyl-CoA carboxylase is a heterohexamer composed of biotin carboxyl carrier protein (AccB), biotin carboxylase (AccC) and two subunits each of ACCase subunit alpha (AccA) and ACCase subunit beta (AccD).

It localises to the cytoplasm. The enzyme catalyses N(6)-carboxybiotinyl-L-lysyl-[protein] + acetyl-CoA = N(6)-biotinyl-L-lysyl-[protein] + malonyl-CoA. It participates in lipid metabolism; malonyl-CoA biosynthesis; malonyl-CoA from acetyl-CoA: step 1/1. In terms of biological role, component of the acetyl coenzyme A carboxylase (ACC) complex. First, biotin carboxylase catalyzes the carboxylation of biotin on its carrier protein (BCCP) and then the CO(2) group is transferred by the carboxyltransferase to acetyl-CoA to form malonyl-CoA. This is Acetyl-coenzyme A carboxylase carboxyl transferase subunit alpha from Gluconacetobacter diazotrophicus (strain ATCC 49037 / DSM 5601 / CCUG 37298 / CIP 103539 / LMG 7603 / PAl5).